The chain runs to 145 residues: DnaJ homolog subfamily B member 3 (145 aa).

The J domain occupies 1 to 69 (MVDYYEVLDV…KKRDIYDRYG (69 aa)).

As to expression, expressed in sperm (at protein level).

Functionally, may operate as a co-chaperone of the male germ cell- and haploid stage-specific Hsp70 proteins. In Homo sapiens (Human), this protein is DnaJ homolog subfamily B member 3 (DNAJB3).